The primary structure comprises 266 residues: tRNA pseudouridine synthase A (266 aa).

D56 (nucleophile) is an active-site residue. Y110 serves as a coordination point for substrate.

Belongs to the tRNA pseudouridine synthase TruA family.

It carries out the reaction uridine(38/39/40) in tRNA = pseudouridine(38/39/40) in tRNA. Functionally, formation of pseudouridine at positions 38, 39 and 40 in the anticodon stem and loop of transfer RNAs. The chain is tRNA pseudouridine synthase A from Halobacterium salinarum (strain ATCC 29341 / DSM 671 / R1).